Here is a 202-residue protein sequence, read N- to C-terminus: ATP-dependent Clp protease proteolytic subunit 1 (202 aa).

S102 acts as the Nucleophile in catalysis. Residue H127 is part of the active site.

Belongs to the peptidase S14 family. Fourteen ClpP subunits assemble into 2 heptameric rings which stack back to back to give a disk-like structure with a central cavity, resembling the structure of eukaryotic proteasomes.

The protein resides in the cytoplasm. It catalyses the reaction Hydrolysis of proteins to small peptides in the presence of ATP and magnesium. alpha-casein is the usual test substrate. In the absence of ATP, only oligopeptides shorter than five residues are hydrolyzed (such as succinyl-Leu-Tyr-|-NHMec, and Leu-Tyr-Leu-|-Tyr-Trp, in which cleavage of the -Tyr-|-Leu- and -Tyr-|-Trp bonds also occurs).. Cleaves peptides in various proteins in a process that requires ATP hydrolysis. Has a chymotrypsin-like activity. Plays a major role in the degradation of misfolded proteins. The protein is ATP-dependent Clp protease proteolytic subunit 1 of Agrobacterium fabrum (strain C58 / ATCC 33970) (Agrobacterium tumefaciens (strain C58)).